A 92-amino-acid chain; its full sequence is Small ribosomal subunit protein uS19c (92 aa).

Belongs to the universal ribosomal protein uS19 family.

It is found in the plastid. The protein resides in the chloroplast. Protein S19 forms a complex with S13 that binds strongly to the 16S ribosomal RNA. The sequence is that of Small ribosomal subunit protein uS19c from Morus indica (Mulberry).